The primary structure comprises 459 residues: ATP synthase subunit beta (459 aa).

Glycine 149–threonine 156 lines the ATP pocket.

It belongs to the ATPase alpha/beta chains family. F-type ATPases have 2 components, CF(1) - the catalytic core - and CF(0) - the membrane proton channel. CF(1) has five subunits: alpha(3), beta(3), gamma(1), delta(1), epsilon(1). CF(0) has three main subunits: a(1), b(2) and c(9-12). The alpha and beta chains form an alternating ring which encloses part of the gamma chain. CF(1) is attached to CF(0) by a central stalk formed by the gamma and epsilon chains, while a peripheral stalk is formed by the delta and b chains.

Its subcellular location is the cell inner membrane. The catalysed reaction is ATP + H2O + 4 H(+)(in) = ADP + phosphate + 5 H(+)(out). Produces ATP from ADP in the presence of a proton gradient across the membrane. The catalytic sites are hosted primarily by the beta subunits. The chain is ATP synthase subunit beta from Pseudomonas syringae pv. tomato (strain ATCC BAA-871 / DC3000).